The following is a 1197-amino-acid chain: SRC kinase signaling inhibitor 1 (1197 aa).

The span at 19-45 shows a compositional bias: basic and acidic residues; the sequence is AEGRARSPREEVGPRDPGGRGEPDPER. Residues 19-80 are disordered; it reads AEGRARSPRE…GGSGGRRFSN (62 aa). 2 positions are modified to phosphoserine: S47 and S52. Residues 65 to 75 are compositionally biased toward gly residues; sequence LGGGGSGGSGG. Residue S79 is modified to Phosphoserine. A Phosphothreonine modification is found at T86. S87, S98, S178, S200, S204, S214, and S260 each carry phosphoserine. A Phosphotyrosine modification is found at Y276. The interval 319–415 is disordered; sequence ASRESSPTRR…RRDVKPDEDL (97 aa). Positions 321 to 331 are enriched in polar residues; sequence RESSPTRRLNN. The span at 332–341 shows a compositional bias: low complexity; sequence LSPASHLASS. Phosphoserine occurs at positions 333, 342, and 359. The span at 348–366 shows a compositional bias: low complexity; it reads PSGLPSGLPSGSPSRSRLS. 2 positions are modified to omega-N-methylarginine: R364 and R371. Residues S378, S397, and S399 each carry the phosphoserine modification. Over residues 391–400 the composition is skewed to polar residues; the sequence is PTSQGVSPSP. Over residues 404-415 the composition is skewed to basic and acidic residues; the sequence is LERRDVKPDEDL. Residue Y431 is modified to Phosphotyrosine. A disordered region spans residues 501–676; that stretch reads GFRLPPSSPQ…AVSSTPAGQP (176 aa). A compositionally biased stretch (pro residues) spans 520-531; sequence GGPPPPHSPYSG. 3 positions are modified to phosphoserine: S527, S530, and S534. An Omega-N-methylarginine modification is found at R535. Phosphoserine is present on residues S537, S547, S549, S551, and S556. Residues 595–607 show a composition bias toward basic and acidic residues; the sequence is KDTETRERMEAME. Phosphoserine is present on residues S631 and S655. Phosphothreonine is present on residues T658 and T671. The tract at residues 681-731 is interaction with SNAP25; it reads RLQMQMHLRGLQNSASDLRGQLQQLRKLQLQNQESVRALLKRTEAELSMRV. Coiled-coil stretches lie at residues 688–708 and 760–780; these read LRGL…LRKL and EELI…IQRD. Residues S878 and S900 each carry the phosphoserine modification. 2 disordered regions span residues 891–949 and 983–1065; these read GLDF…ERDW and DCAS…VVTS. Phosphothreonine is present on T918. S1021 is subject to Phosphoserine. Over residues 1036–1045 the composition is skewed to pro residues; it reads KSPPPPPPRR. A phosphoserine mark is found at S1077 and S1094. The tract at residues 1141 to 1163 is disordered; the sequence is SRLKAAQGPAGSPDKGKHGKQRT.

This sequence belongs to the SRCIN1 family. In terms of assembly, interacts with BCAR1/p130Cas through its C-terminal domain and with CSK, CTTN and SRC. Also interacts with MAPRE3/EB3, SORBS3/vinexin and the N-terminal coiled-coil region of SNAP25. Post-translationally, tyrosine-phosphorylated in response to EGF and to cell adhesion to integrin ligands. In terms of tissue distribution, expressed exclusively in brain. Abundant in telencephalon and expressed moderately in cerebellum, hypothalamus, thalamus, superior and inferior colliculi, and olfactory bulb. No expression detected in medulla oblongata, spinal cord or pituitary gland. Enriched in the neuropil rather than soma in the thalamus, corpus striatum and cerebral cortex. Detected in astrocytes.

Its subcellular location is the cytoplasm. The protein localises to the cytoskeleton. It is found in the cell projection. The protein resides in the axon. It localises to the dendrite. Its subcellular location is the presynapse. The protein localises to the postsynapse. It is found in the postsynaptic density. In terms of biological role, acts as a negative regulator of SRC by activating CSK which inhibits SRC activity and downstream signaling, leading to impaired cell spreading and migration. Regulates dendritic spine morphology. Involved in calcium-dependent exocytosis. May play a role in neurotransmitter release or synapse maintenance. This Rattus norvegicus (Rat) protein is SRC kinase signaling inhibitor 1.